The chain runs to 103 residues: Ubiquitin-related modifier 1 (103 aa).

G103 bears the 1-thioglycine mark. A Glycyl lysine isopeptide (Gly-Lys) (interchain with K-? in acceptor proteins) cross-link involves residue G103.

The protein belongs to the URM1 family. In terms of processing, C-terminal thiocarboxylation occurs in 2 steps, it is first acyl-adenylated (-COAMP) via the hesA/moeB/thiF part of UBA4, then thiocarboxylated (-COSH) via the rhodanese domain of UBA4.

It is found in the cytoplasm. Its pathway is tRNA modification; 5-methoxycarbonylmethyl-2-thiouridine-tRNA biosynthesis. Its function is as follows. Acts as a sulfur carrier required for 2-thiolation of mcm(5)S(2)U at tRNA wobble positions of cytosolic tRNA(Lys), tRNA(Glu) and tRNA(Gln). Serves as sulfur donor in tRNA 2-thiolation reaction by being thiocarboxylated (-COSH) at its C-terminus by the MOCS3 homolog UBA4. The sulfur is then transferred to tRNA to form 2-thiolation of mcm(5)S(2)U. Prior mcm(5) tRNA modification by the elongator complex is required for 2-thiolation. Also acts as a ubiquitin-like protein (UBL) that is covalently conjugated via an isopeptide bond to lysine residues of target proteins such as AHP1. The thiocarboxylated form serves as substrate for conjugation and oxidative stress specifically induces the formation of UBL-protein conjugates. This Vanderwaltozyma polyspora (strain ATCC 22028 / DSM 70294 / BCRC 21397 / CBS 2163 / NBRC 10782 / NRRL Y-8283 / UCD 57-17) (Kluyveromyces polysporus) protein is Ubiquitin-related modifier 1.